Consider the following 407-residue polypeptide: Tryptophan synthase beta chain (407 aa).

Positions 1 to 11 (MSTAPSQQHAS) are enriched in polar residues. The segment at 1-25 (MSTAPSQQHASAQVPDPRGRFGDFG) is disordered. K100 is subject to N6-(pyridoxal phosphate)lysine.

It belongs to the TrpB family. Tetramer of two alpha and two beta chains. Requires pyridoxal 5'-phosphate as cofactor.

The enzyme catalyses (1S,2R)-1-C-(indol-3-yl)glycerol 3-phosphate + L-serine = D-glyceraldehyde 3-phosphate + L-tryptophan + H2O. It participates in amino-acid biosynthesis; L-tryptophan biosynthesis; L-tryptophan from chorismate: step 5/5. Its function is as follows. The beta subunit is responsible for the synthesis of L-tryptophan from indole and L-serine. The sequence is that of Tryptophan synthase beta chain from Rhodopirellula baltica (strain DSM 10527 / NCIMB 13988 / SH1).